The primary structure comprises 459 residues: SLIT-ROBO Rho GTPase-activating protein 2C (459 aa).

An F-BAR domain is found at 22–325 (KEIRAQLTEQ…AVENLDATSD (304 aa)). Residues 181 to 202 (LKEAEKQEEKQIGKSVKQEDRQ) are compositionally biased toward basic and acidic residues. The segment at 181–211 (LKEAEKQEEKQIGKSVKQEDRQTPCSPDSTA) is disordered. The stretch at 363 to 401 (QSELVQRCQQLQSRLSTLKIENEEVKKTMEATLQTIQDI) forms a coiled coil.

As to quaternary structure, homodimer. Interacts (via F-BAR domain) with SRGAP2/SRGAP2A (via F-BAR domain); formation of the heterodimer inhibits SRGAP2/SRGAP2A function. Ubiquitously expressed with higher expression in cerebellum. Probably expressed in fetal and adult neurons (at protein level).

Functionally, human-specific protein that acts as a key modifier of cortical connectivity in the human brain. Acts by inhibiting the functions of ancestral paralog SRGAP2/SRGAP2A, a postsynaptic protein that regulates excitatory and inhibitory synapse maturation and density in cortical pyramidal neurons. SRGAP2C is unstable but is able to heterodimerize with SRGAP2/SRGAP2A, thereby reducing SRGAP2/SRGAP2A levels through proteasome-dependent degradation. Inhibition of SRGAP2/SRGAP2A by SRGAP2C leads to an increase in synaptic density and protracted synaptic maturation of both excitatory and inhibitory synapses. Modifies cortical circuit connectivity by increasing the number of local and long-range cortical inputs received by layer 2/3 pyramidal neurons. Also able to increase the probability of sensory-evoked responses by layer 2/3 pyramidal neurons. The sequence is that of SLIT-ROBO Rho GTPase-activating protein 2C from Homo sapiens (Human).